A 370-amino-acid chain; its full sequence is Phospho-N-acetylmuramoyl-pentapeptide-transferase (370 aa).

11 helical membrane passes run 21 to 41 (PTSI…DLFI), 46 to 66 (LLVP…WGII), 92 to 112 (PSMG…LFAL), 117 to 137 (FSKQ…IGLI), 151 to 171 (LSVK…LVLI), 181 to 201 (ILIF…IALF), 217 to 237 (DGLA…ELII), 243 to 263 (NYAI…FLIF), 270 to 290 (VFMG…VALL), 298 to 318 (LIMG…VGVF), and 349 to 369 (TIIV…AIML).

Belongs to the glycosyltransferase 4 family. MraY subfamily. It depends on Mg(2+) as a cofactor.

It localises to the cell inner membrane. The enzyme catalyses UDP-N-acetyl-alpha-D-muramoyl-L-alanyl-gamma-D-glutamyl-meso-2,6-diaminopimeloyl-D-alanyl-D-alanine + di-trans,octa-cis-undecaprenyl phosphate = di-trans,octa-cis-undecaprenyl diphospho-N-acetyl-alpha-D-muramoyl-L-alanyl-D-glutamyl-meso-2,6-diaminopimeloyl-D-alanyl-D-alanine + UMP. It participates in cell wall biogenesis; peptidoglycan biosynthesis. Its function is as follows. Catalyzes the initial step of the lipid cycle reactions in the biosynthesis of the cell wall peptidoglycan: transfers peptidoglycan precursor phospho-MurNAc-pentapeptide from UDP-MurNAc-pentapeptide onto the lipid carrier undecaprenyl phosphate, yielding undecaprenyl-pyrophosphoryl-MurNAc-pentapeptide, known as lipid I. This is Phospho-N-acetylmuramoyl-pentapeptide-transferase from Prochlorococcus marinus (strain SARG / CCMP1375 / SS120).